A 298-amino-acid polypeptide reads, in one-letter code: Mitochondrial dicarboxylate/tricarboxylate transporter DTC (298 aa).

Solcar repeat units lie at residues 12–93 (WTTV…LTAK), 103–194 (LPLY…SAEY), and 202–292 (GEMS…ITKF). Transmembrane regions (helical) follow at residues 18 to 38 (FVNGGASGMLATCVIQPIDMI), 68 to 88 (GLSAGLLRQATYTTARLGSFK), 109 to 129 (ALCGLTAGAIGACVGSPADLA), 169 to 189 (GCGPTVVRAMALNMGMLASYD), 208 to 228 (VGASAVSGFCAAACSLPFDFV), and 268 to 288 (FPVYCVRIAPHVMMTWIFLNQ).

Belongs to the mitochondrial carrier (TC 2.A.29) family. Highly expressed in flower buds and at lower levels in roots, leaves and stems.

Its subcellular location is the mitochondrion inner membrane. Its function is as follows. Catalyzes the transport of dicarboxylates, such as oxoglutarate, oxaloacetate, malate, and succinate, and of tricarboxylates, such as citrate, isocitrate, cis-aconitate, and trans-aconitate by a counter-exchange mechanism across the inner mitochondrial membrane. Substrate preference in reconstituted proteoliposomes is oxaloacetate &gt; malonate &gt; malate &gt; maleate &gt; succinate &gt; oxoglutarate &gt; citrate &gt; trans-aconitate &gt; cis-aconitate &gt; sulfate &gt; isocitrate. May be important for plant metabolic functions requiring organic acid flux to or from the mitochondria, such as nitrogen assimilation, export of reducing equivalents from the mitochondria, and fatty acid elongation. The protein is Mitochondrial dicarboxylate/tricarboxylate transporter DTC (DTC) of Arabidopsis thaliana (Mouse-ear cress).